Reading from the N-terminus, the 178-residue chain is Acireductone dioxygenase (178 aa).

Fe(2+) is bound by residues histidine 81, histidine 83, glutamate 87, and histidine 126. Ni(2+) contacts are provided by histidine 81, histidine 83, glutamate 87, and histidine 126.

This sequence belongs to the acireductone dioxygenase (ARD) family. It depends on Fe(2+) as a cofactor. Ni(2+) is required as a cofactor.

Its subcellular location is the cytoplasm. The protein resides in the nucleus. It carries out the reaction 1,2-dihydroxy-5-(methylsulfanyl)pent-1-en-3-one + O2 = 4-methylsulfanyl-2-oxobutanoate + formate + 2 H(+). The enzyme catalyses 1,2-dihydroxy-5-(methylsulfanyl)pent-1-en-3-one + O2 = 3-(methylsulfanyl)propanoate + CO + formate + 2 H(+). It participates in amino-acid biosynthesis; L-methionine biosynthesis via salvage pathway; L-methionine from S-methyl-5-thio-alpha-D-ribose 1-phosphate: step 5/6. Its function is as follows. Catalyzes 2 different reactions between oxygen and the acireductone 1,2-dihydroxy-3-keto-5-methylthiopentene (DHK-MTPene) depending upon the metal bound in the active site. Fe-containing acireductone dioxygenase (Fe-ARD) produces formate and 2-keto-4-methylthiobutyrate (KMTB), the alpha-ketoacid precursor of methionine in the methionine recycle pathway. Ni-containing acireductone dioxygenase (Ni-ARD) produces methylthiopropionate, carbon monoxide and formate, and does not lie on the methionine recycle pathway. This is Acireductone dioxygenase (adi1) from Neurospora crassa (strain ATCC 24698 / 74-OR23-1A / CBS 708.71 / DSM 1257 / FGSC 987).